Consider the following 350-residue polypeptide: Protein RecA (350 aa).

Residue 68–75 coordinates ATP; it reads GPESSGKT.

This sequence belongs to the RecA family.

It localises to the cytoplasm. Functionally, can catalyze the hydrolysis of ATP in the presence of single-stranded DNA, the ATP-dependent uptake of single-stranded DNA by duplex DNA, and the ATP-dependent hybridization of homologous single-stranded DNAs. It interacts with LexA causing its activation and leading to its autocatalytic cleavage. The protein is Protein RecA of Mycolicibacterium vanbaalenii (strain DSM 7251 / JCM 13017 / BCRC 16820 / KCTC 9966 / NRRL B-24157 / PYR-1) (Mycobacterium vanbaalenii).